The sequence spans 487 residues: Serine/threonine-protein kinase 4 (487 aa).

Position 1 is an N-acetylmethionine (Met1). Thr3 is subject to Phosphothreonine. The Protein kinase domain occupies 30–281 (FDVLEKLGEG…ATQLLQHPFV (252 aa)). Residues 36–44 (LGEGSYGSV) and Lys59 each bind ATP. The active-site Proton acceptor is the Asp149. At Thr183 the chain carries Phosphothreonine; by autocatalysis. Residue Ser265 is modified to Phosphoserine. Positions 290–310 (LRDLINEAMDVKLKRQESQQR) form a coiled coil. Basic and acidic residues predominate over residues 303–312 (KRQESQQREV). Positions 303–332 (KRQESQQREVDQDDEENSEEDEMDSGTMVR) are disordered. Over residues 313 to 326 (DQDDEENSEEDEMD) the composition is skewed to acidic residues. Residue Ser320 is modified to Phosphoserine. 2 positions are modified to phosphothreonine: Thr340 and Thr367. Thr387 is subject to Phosphothreonine; by PKB/AKT1. A phosphoserine mark is found at Ser410 and Ser414. Position 433 is a phosphotyrosine (Tyr433). One can recognise an SARAH domain in the interval 433–480 (YEFLKSWTVEDLQKRLLALDPMMEQEIEEIRQKYQSKRQPILDAIEAK).

It belongs to the protein kinase superfamily. STE Ser/Thr protein kinase family. STE20 subfamily. In terms of assembly, homodimer; mediated via the coiled-coil region. Interacts with NORE1, which inhibits autoactivation. Interacts with and stabilizes SAV1. Interacts with RASSF1. Interacts with FOXO3. Interacts with RASSF2 (via SARAH domain). Interacts with AR, PKB/AKT1, TNNI3 and SIRT1. Interacts with DLG5 (via PDZ domain 3). Interacts with MARK3 and SCRIB in the presence of DLG5. The cofactor is Mg(2+). In terms of processing, autophosphorylated on serine and threonine residues. Phosphorylation at Thr-387 by PKB/AKT1, leads to inhibition of its: kinase activity, nuclear translocation and autophosphorylation at Thr-183. It also diminishes its cleavage by caspases and its ability to phosphorylate FOXO3. Post-translationally, proteolytically cleaved by caspase-3 during apoptosis at Asp-326 and Asp-349 resulting in a 37 kDa or a 39 kDa subunit respectively. The 39 kDa subunit is further cleaved into the 37 kDa form. Proteolytic cleavage results in kinase activation and nuclear translocation of the truncated form (MST1/N). It is less likely that cleavage at Asp-349 is a prerequisite for activation as this site is not conserved in the murine ortholog.

Its subcellular location is the cytoplasm. It is found in the nucleus. The catalysed reaction is L-seryl-[protein] + ATP = O-phospho-L-seryl-[protein] + ADP + H(+). It catalyses the reaction L-threonyl-[protein] + ATP = O-phospho-L-threonyl-[protein] + ADP + H(+). Its activity is regulated as follows. Inhibited by the C-terminal non-catalytic region. Activated by caspase-cleavage. Full activation also requires homodimerization and autophosphorylation of Thr-183. Activated by RASSF1 which acts by preventing its dephosphorylation. Stress-activated, pro-apoptotic kinase which, following caspase-cleavage, enters the nucleus and induces chromatin condensation followed by internucleosomal DNA fragmentation. Key component of the Hippo signaling pathway which plays a pivotal role in organ size control and tumor suppression by restricting proliferation and promoting apoptosis. The core of this pathway is composed of a kinase cascade wherein STK3/MST2 and STK4/MST1, in complex with its regulatory protein SAV1, phosphorylates and activates LATS1/2 in complex with its regulatory protein MOB1, which in turn phosphorylates and inactivates YAP1 oncoprotein and WWTR1/TAZ. Phosphorylation of YAP1 by LATS2 inhibits its translocation into the nucleus to regulate cellular genes important for cell proliferation, cell death, and cell migration. STK3/MST2 and STK4/MST1 are required to repress proliferation of mature hepatocytes, to prevent activation of facultative adult liver stem cells (oval cells), and to inhibit tumor formation. Phosphorylates 'Ser-14' of histone H2B (H2BS14ph) during apoptosis. Phosphorylates FOXO3 upon oxidative stress, which results in its nuclear translocation and cell death initiation. Phosphorylates MOBKL1A, MOBKL1B and RASSF2. Phosphorylates TNNI3 (cardiac Tn-I) and alters its binding affinity to TNNC1 (cardiac Tn-C) and TNNT2 (cardiac Tn-T). Phosphorylates FOXO1 on 'Ser-212' and regulates its activation and stimulates transcription of PMAIP1 in a FOXO1-dependent manner. Phosphorylates SIRT1 and inhibits SIRT1-mediated p53/TP53 deacetylation, thereby promoting p53/TP53 dependent transcription and apoptosis upon DNA damage. Acts as an inhibitor of PKB/AKT1. Phosphorylates AR on 'Ser-650' and suppresses its activity by intersecting with PKB/AKT1 signaling and antagonizing formation of AR-chromatin complexes. This is Serine/threonine-protein kinase 4 (STK4) from Chlorocebus aethiops (Green monkey).